Reading from the N-terminus, the 385-residue chain is ATP phosphoribosyltransferase regulatory subunit (385 aa).

It belongs to the class-II aminoacyl-tRNA synthetase family. HisZ subfamily. Heteromultimer composed of HisG and HisZ subunits.

The protein resides in the cytoplasm. Its pathway is amino-acid biosynthesis; L-histidine biosynthesis; L-histidine from 5-phospho-alpha-D-ribose 1-diphosphate: step 1/9. Functionally, required for the first step of histidine biosynthesis. May allow the feedback regulation of ATP phosphoribosyltransferase activity by histidine. The chain is ATP phosphoribosyltransferase regulatory subunit from Bordetella pertussis (strain Tohama I / ATCC BAA-589 / NCTC 13251).